The primary structure comprises 266 residues: Transcription factor atoh8 (266 aa).

The tract at residues 140 to 164 (AASQAPAGGSERAESPRKRAGEPSG) is disordered. Positions 150 to 160 (ERAESPRKRAG) are enriched in basic and acidic residues. The tract at residues 175–188 (TRRLLANARERTRV) is basic motif; degenerate. Residues 175-227 (TRRLLANARERTRVHTISAAFEALRKQVPCYSYGQKLSKLAILRIACNYILSL) enclose the bHLH domain. A helix-loop-helix motif region spans residues 189 to 227 (HTISAAFEALRKQVPCYSYGQKLSKLAILRIACNYILSL).

The protein resides in the nucleus. Its subcellular location is the nucleus speckle. It is found in the cytoplasm. In terms of biological role, transcription factor that binds a palindromic (canonical) core consensus DNA sequence 5'-CANNTG- 3' known as an E-box element, possibly as a heterodimer with other bHLH proteins. During development, is required for heart looping and swim bladder formation by acting in concert with GATA4 and ZFPM1. During the development of both the retina and skeletal muscles is required for neural retinal cell through modulating PAX6 and NEUROG3 expression and myogenic differentiation. The protein is Transcription factor atoh8 of Danio rerio (Zebrafish).